The chain runs to 509 residues: tRNA-2-methylthio-N(6)-dimethylallyladenosine synthase (509 aa).

The segment covering 1–15 (MNEQQRLASQQVNSS) has biased composition (polar residues). Positions 1–26 (MNEQQRLASQQVNSSTKKEEKDYSKY) are disordered. Positions 16–25 (TKKEEKDYSK) are enriched in basic and acidic residues. The region spanning 66-184 (RKFYIRTYGC…LPYILKDAMF (119 aa)) is the MTTase N-terminal domain. The [4Fe-4S] cluster site is built by C75, C111, C145, C221, C225, and C228. The region spanning 207 to 437 (RRGDIKAWVN…NALVNKLAIE (231 aa)) is the Radical SAM core domain. Positions 440 to 503 (DRYKGQIVEV…TWSLNGELVE (64 aa)) constitute a TRAM domain.

Belongs to the methylthiotransferase family. MiaB subfamily. As to quaternary structure, monomer. Requires [4Fe-4S] cluster as cofactor.

It is found in the cytoplasm. It carries out the reaction N(6)-dimethylallyladenosine(37) in tRNA + (sulfur carrier)-SH + AH2 + 2 S-adenosyl-L-methionine = 2-methylsulfanyl-N(6)-dimethylallyladenosine(37) in tRNA + (sulfur carrier)-H + 5'-deoxyadenosine + L-methionine + A + S-adenosyl-L-homocysteine + 2 H(+). Its function is as follows. Catalyzes the methylthiolation of N6-(dimethylallyl)adenosine (i(6)A), leading to the formation of 2-methylthio-N6-(dimethylallyl)adenosine (ms(2)i(6)A) at position 37 in tRNAs that read codons beginning with uridine. In Bacillus cereus (strain ZK / E33L), this protein is tRNA-2-methylthio-N(6)-dimethylallyladenosine synthase.